The sequence spans 364 residues: NADH-quinone oxidoreductase subunit H (364 aa).

The next 8 helical transmembrane spans lie at 15–35, 84–104, 123–143, 169–189, 206–226, 257–277, 302–322, and 341–361; these read LLVLGQIGLFTLVLLLSIAFL, AVFILAPILTCTLAFVTWAAI, VGVLYLFAISSLGVYGIIMGG, IGFVIVTVILLVGSMNLTTIV, YFPLIVVMVPMFVIFFISALA, LFMLGEYLNIVLMCAMMTILF, LSGLAWFMGKVLFCFFLFALV, and IFLPTSLAAVIIVAGYVTFVG.

It belongs to the complex I subunit 1 family. As to quaternary structure, NDH-1 is composed of 14 different subunits. Subunits NuoA, H, J, K, L, M, N constitute the membrane sector of the complex.

The protein localises to the cell inner membrane. It carries out the reaction a quinone + NADH + 5 H(+)(in) = a quinol + NAD(+) + 4 H(+)(out). NDH-1 shuttles electrons from NADH, via FMN and iron-sulfur (Fe-S) centers, to quinones in the respiratory chain. The immediate electron acceptor for the enzyme in this species is believed to be ubiquinone. Couples the redox reaction to proton translocation (for every two electrons transferred, four hydrogen ions are translocated across the cytoplasmic membrane), and thus conserves the redox energy in a proton gradient. This subunit may bind ubiquinone. The protein is NADH-quinone oxidoreductase subunit H of Hyphomonas neptunium (strain ATCC 15444).